Reading from the N-terminus, the 157-residue chain is Phosphopantetheine adenylyltransferase (157 aa).

Residue T10 participates in substrate binding. ATP-binding positions include 10–11 and H18; that span reads TF. Substrate is bound by residues K42, L74, and R88. ATP is bound by residues 89-91, E99, and 124-130; these read GLR and NAFISSS.

It belongs to the bacterial CoaD family. As to quaternary structure, homohexamer. Mg(2+) serves as cofactor.

It localises to the cytoplasm. It carries out the reaction (R)-4'-phosphopantetheine + ATP + H(+) = 3'-dephospho-CoA + diphosphate. Its pathway is cofactor biosynthesis; coenzyme A biosynthesis; CoA from (R)-pantothenate: step 4/5. In terms of biological role, reversibly transfers an adenylyl group from ATP to 4'-phosphopantetheine, yielding dephospho-CoA (dPCoA) and pyrophosphate. The sequence is that of Phosphopantetheine adenylyltransferase from Helicobacter pylori (strain Shi470).